The primary structure comprises 328 residues: 2-hydroxyisoflavanone dehydratase (328 aa).

The Involved in the stabilization of the negatively charged intermediate by the formation of the oxyanion hole motif lies at 85–87; the sequence is HGG. Residues Thr-173, Asp-272, and His-304 contribute to the active site.

The protein belongs to the 'GDXG' lipolytic enzyme family.

It catalyses the reaction (2R,3S)-2,4',7-trihydroxyisoflavanone = daidzein + H2O + H(+). It carries out the reaction 2-hydroxy-2,3-dihydrogenistein = genistein + H2O + H(+). The enzyme catalyses a carboxylic ester + H2O = an alcohol + a carboxylate + H(+). The protein operates within secondary metabolite biosynthesis; flavonoid biosynthesis. Dehydratase that mediates the biosynthesis of isoflavonoids. Can better use 2,7-dihydroxy-4'-methoxyisoflavanone as substrate. Has also a slight carboxylesterase activity toward p-nitrophenyl butyrate. The polypeptide is 2-hydroxyisoflavanone dehydratase (HIDM) (Glycyrrhiza echinata (Licorice)).